Consider the following 164-residue polypeptide: Small ribosomal subunit protein uS5 (164 aa).

The 64-residue stretch at 10–73 (IEERVVAINR…ESAKKNMIEV (64 aa)) folds into the S5 DRBM domain.

Belongs to the universal ribosomal protein uS5 family. Part of the 30S ribosomal subunit. Contacts proteins S4 and S8.

In terms of biological role, with S4 and S12 plays an important role in translational accuracy. Its function is as follows. Located at the back of the 30S subunit body where it stabilizes the conformation of the head with respect to the body. The sequence is that of Small ribosomal subunit protein uS5 from Streptococcus suis (strain 98HAH33).